The sequence spans 281 residues: MSEQTIYGANTPGGSGPRTKIRTHHLQRWKADGHKWAMLTAYDYSTARIFDEAGIPVLLVGDSAANVVYGYDTTVPISIDELIPLVRGVVRGAPHALVVADLPFGSYEAGPTAALAAATRFLKDGGAHAVKLEGGERVAEQIACLTAAGIPVMAHIGFTPQSVNTLGGFRVQGRGDAAEQTIADAIAVAEAGAFAVVMEMVPAELATQITGKLTIPTVGIGAGPNCDGQVLVWQDMAGFSGAKTARFVKRYADVGGELRRAAMQYAQEVAGGVFPADEHSF.

Residues 1–20 (MSEQTIYGANTPGGSGPRTK) are disordered. Residues Asp-62 and Asp-101 each coordinate Mg(2+). Residues 62–63 (DS), Asp-101, and Lys-131 each bind 3-methyl-2-oxobutanoate. Glu-133 provides a ligand contact to Mg(2+). The active-site Proton acceptor is Glu-199.

Belongs to the PanB family. Homodecamer; pentamer of dimers. Mg(2+) is required as a cofactor.

The protein localises to the cytoplasm. The catalysed reaction is 3-methyl-2-oxobutanoate + (6R)-5,10-methylene-5,6,7,8-tetrahydrofolate + H2O = 2-dehydropantoate + (6S)-5,6,7,8-tetrahydrofolate. Its pathway is cofactor biosynthesis; (R)-pantothenate biosynthesis; (R)-pantoate from 3-methyl-2-oxobutanoate: step 1/2. In terms of biological role, catalyzes the reversible reaction in which hydroxymethyl group from 5,10-methylenetetrahydrofolate is transferred onto alpha-ketoisovalerate to form ketopantoate. The protein is 3-methyl-2-oxobutanoate hydroxymethyltransferase of Mycobacterium bovis (strain ATCC BAA-935 / AF2122/97).